Consider the following 497-residue polypeptide: PHD finger protein 10 (497 aa).

Residues 1–13 (MTAAGPGAAPSPG) are compositionally biased toward low complexity. A disordered region spans residues 1 to 61 (MTAAGPGAAP…SSRSCETSSQ (61 aa)). Serine 11, serine 35, and serine 49 each carry phosphoserine. Residues 88 to 184 (MLQEQVSEYL…HYKEYSQMQQ (97 aa)) are essential to induce neural progenitor proliferation. The interval 88 to 294 (MLQEQVSEYL…PPLDPELPAL (207 aa)) is SAY. Residue lysine 240 forms a Glycyl lysine isopeptide (Lys-Gly) (interchain with G-Cter in SUMO2) linkage. Residue serine 269 is modified to Phosphoserine. Residues 284–295 (EPPLDPELPALD) are compositionally biased toward low complexity. The disordered stretch occupies residues 284–368 (EPPLDPELPA…RSVLSKSAPG (85 aa)). Positions 291–333 (LPALDSDGDSDDGEDGGGDEKRKNKGTSDSSSGNVSEGDSPPD) are essential to induce neural progenitor proliferation. Residues serine 296, serine 300, serine 326, and serine 330 each carry the phosphoserine modification. Residues 296–307 (SDGDSDDGEDGG) show a composition bias toward acidic residues. Over residues 317 to 327 (TSDSSSGNVSE) the composition is skewed to polar residues. Residues 337 to 358 (DTFHGRQKSKDKMATPRKDGSK) show a composition bias toward basic and acidic residues. The PHD-type 1; degenerate zinc finger occupies 378 to 435 (LCGICLKGKESNKKGKAESLIHCSQCDNSGHPSCLDMTMELVSMIKTYPWQCMECKTC). Residue lysine 384 forms a Glycyl lysine isopeptide (Lys-Gly) (interchain with G-Cter in SUMO2) linkage. The PHD-type 2; degenerate zinc finger occupies 437 to 480 (ICGQPHHEEEMMFCDVCDRGYHTFCVGLGAIPSGRWICDCCQRA).

This sequence belongs to the SAYP family. As to quaternary structure, component of neural progenitors-specific chromatin remodeling complex (npBAF complex) composed of at least, ARID1A/BAF250A or ARID1B/BAF250B, SMARCD1/BAF60A, SMARCD3/BAF60C, SMARCA2/BRM/BAF190B, SMARCA4/BRG1/BAF190A, SMARCB1/BAF47, SMARCC1/BAF155, SMARCE1/BAF57, SMARCC2/BAF170, PHF10/BAF45A, ACTL6A/BAF53A and actin. Interacts with ACTL6A/BAF53A, SMARCA2/BRM/BAF190B, SMARCA4/BRG1/BAF190A and PBRM1/BAF180. Widely expressed. Expressed selectively in neural stem and progenitor cells (at protein level).

Its subcellular location is the nucleus. Functionally, involved in transcription activity regulation by chromatin remodeling. Belongs to the neural progenitors-specific chromatin remodeling complex (npBAF complex) and is required for the proliferation of neural progenitors. During neural development a switch from a stem/progenitor to a post-mitotic chromatin remodeling mechanism occurs as neurons exit the cell cycle and become committed to their adult state. The transition from proliferating neural stem/progenitor cells to post-mitotic neurons requires a switch in subunit composition of the npBAF and nBAF complexes. As neural progenitors exit mitosis and differentiate into neurons, npBAF complexes which contain ACTL6A/BAF53A and PHF10/BAF45A, are exchanged for homologous alternative ACTL6B/BAF53B and DPF1/BAF45B or DPF3/BAF45C subunits in neuron-specific complexes (nBAF). The npBAF complex is essential for the self-renewal/proliferative capacity of the multipotent neural stem cells. The nBAF complex along with CREST plays a role regulating the activity of genes essential for dendrite growth. In Mus musculus (Mouse), this protein is PHD finger protein 10 (Phf10).